Reading from the N-terminus, the 425-residue chain is COBRA-like protein 4 (425 aa).

The first 27 residues, 1–27, serve as a signal peptide directing secretion; it reads MAIGVGGCCAVLLAAALLFSSPATTYA. 5 N-linked (GlcNAc...) asparagine glycosylation sites follow: Asn36, Asn163, Asn171, Asn319, and Asn352.

Belongs to the COBRA family.

The protein is COBRA-like protein 4 (BC1L9) of Oryza sativa subsp. japonica (Rice).